We begin with the raw amino-acid sequence, 364 residues long: DNA polymerase IV (364 aa).

One can recognise a UmuC domain in the interval 7–187 (IIHVDMDAFY…LPVNRVPGVG (181 aa)). Mg(2+) is bound by residues Asp-11 and Asp-105. The active site involves Glu-106.

This sequence belongs to the DNA polymerase type-Y family. Monomer. Mg(2+) is required as a cofactor.

The protein localises to the cytoplasm. The catalysed reaction is DNA(n) + a 2'-deoxyribonucleoside 5'-triphosphate = DNA(n+1) + diphosphate. In terms of biological role, poorly processive, error-prone DNA polymerase involved in untargeted mutagenesis. Copies undamaged DNA at stalled replication forks, which arise in vivo from mismatched or misaligned primer ends. These misaligned primers can be extended by PolIV. Exhibits no 3'-5' exonuclease (proofreading) activity. May be involved in translesional synthesis, in conjunction with the beta clamp from PolIII. This is DNA polymerase IV from Stenotrophomonas maltophilia (strain K279a).